Consider the following 87-residue polypeptide: Small ribosomal subunit protein bS20 (87 aa).

This sequence belongs to the bacterial ribosomal protein bS20 family.

Its function is as follows. Binds directly to 16S ribosomal RNA. In Alkaliphilus metalliredigens (strain QYMF), this protein is Small ribosomal subunit protein bS20.